Consider the following 320-residue polypeptide: MIKKIGVLTSGGDAPGMNAAIRGVVRAALSEGLEVCGIYDGYLGLYEDRMINLDRYSVSDMINRGGTFLGSARFPEFRNEDVRSVAIENMKKRGIDALVVIGGDGSYMGAKRLTEMGFPCIGLPGTIDNDVAGTDYTIGYFTALETVVEAIDRLRDTSSSHQRISIVEVMGRYCGDLTLAAAIAGGCEFIVLPEIPYTREELVNEIKAGIAKGKKHAIVAITEHICDINELAKYIEQETKRETRATVLGHIQRGGAPVAYDRILASRMGAYSIELLLQGYGGRCVGIQNEKMVHHDIIDAIENMKRPFKGDWLDTAKKLY.

Gly12 is an ATP binding site. Residues 22-26 (RGVVR) and 55-60 (RYSVSD) contribute to the ADP site. ATP is bound by residues 73–74 (RF) and 103–106 (GDGS). Asp104 contributes to the Mg(2+) binding site. Residue 126-128 (TID) participates in substrate binding. Asp128 (proton acceptor) is an active-site residue. An ADP-binding site is contributed by Arg155. Substrate-binding positions include Arg163 and 170 to 172 (MGR). Residues 186–188 (GCE), Lys212, and 214–216 (KKH) contribute to the ADP site. Residues Glu223, Arg244, and 250–253 (HIQR) contribute to the substrate site.

It belongs to the phosphofructokinase type A (PFKA) family. ATP-dependent PFK group I subfamily. Prokaryotic clade 'B1' sub-subfamily. Homotetramer. It depends on Mg(2+) as a cofactor.

The protein resides in the cytoplasm. It carries out the reaction beta-D-fructose 6-phosphate + ATP = beta-D-fructose 1,6-bisphosphate + ADP + H(+). It functions in the pathway carbohydrate degradation; glycolysis; D-glyceraldehyde 3-phosphate and glycerone phosphate from D-glucose: step 3/4. Its activity is regulated as follows. Allosterically activated by ADP and other diphosphonucleosides, and allosterically inhibited by phosphoenolpyruvate. Its function is as follows. Catalyzes the phosphorylation of D-fructose 6-phosphate to fructose 1,6-bisphosphate by ATP, the first committing step of glycolysis. The polypeptide is ATP-dependent 6-phosphofructokinase (Erwinia tasmaniensis (strain DSM 17950 / CFBP 7177 / CIP 109463 / NCPPB 4357 / Et1/99)).